Reading from the N-terminus, the 138-residue chain is Basic phospholipase A2 BP-I (138 aa).

An N-terminal signal peptide occupies residues 1–16 (MRTLWIMAVLLLGVDG). Intrachain disulfides connect C42–C132, C44–C60, C59–C112, C65–C138, C66–C105, C73–C98, and C91–C103. The Ca(2+) site is built by G45 and G47. Residue H63 is part of the active site. Residue D106 is part of the active site.

Belongs to the phospholipase A2 family. Group II subfamily. K49 sub-subfamily. The cofactor is Ca(2+). Expressed by the venom gland.

The protein localises to the secreted. It catalyses the reaction a 1,2-diacyl-sn-glycero-3-phosphocholine + H2O = a 1-acyl-sn-glycero-3-phosphocholine + a fatty acid + H(+). Snake venom phospholipase A2 (PLA2) that has strong myotoxic activity with a low phospholipase A2 activity. PLA2 catalyzes the calcium-dependent hydrolysis of the 2-acyl groups in 3-sn-phosphoglycerides. This Protobothrops flavoviridis (Habu) protein is Basic phospholipase A2 BP-I.